The chain runs to 350 residues: Fe-S cluster assembly protein dre2 (350 aa).

Positions threonine 23–valine 156 are N-terminal SAM-like domain. The interval proline 157–methionine 242 is linker. The disordered stretch occupies residues asparagine 165–proline 209. Basic and acidic residues predominate over residues lysine 190–valine 208. Residues cysteine 252, cysteine 263, cysteine 266, and cysteine 268 each contribute to the [2Fe-2S] cluster site. Residues cysteine 252–cysteine 268 are fe-S binding site A. Residues cysteine 313, cysteine 316, cysteine 324, and cysteine 327 each coordinate [4Fe-4S] cluster. 2 short sequence motifs (cx2C motif) span residues cysteine 313 to cysteine 316 and cysteine 324 to cysteine 327. The interval cysteine 313 to cysteine 327 is fe-S binding site B.

This sequence belongs to the anamorsin family. In terms of assembly, monomer. Interacts with TAH18. Interacts with MIA40. [2Fe-2S] cluster is required as a cofactor. Requires [4Fe-4S] cluster as cofactor.

It is found in the cytoplasm. The protein localises to the mitochondrion intermembrane space. In terms of biological role, component of the cytosolic iron-sulfur (Fe-S) protein assembly (CIA) machinery required for the maturation of extramitochondrial Fe-S proteins. Part of an electron transfer chain functioning in an early step of cytosolic Fe-S biogenesis, facilitating the de novo assembly of a [4Fe-4S] cluster on the scaffold complex CFD1-NBP35. Electrons are transferred to DRE2 from NADPH via the FAD- and FMN-containing protein TAH18. TAH18-DRE2 are also required for the assembly of the diferric tyrosyl radical cofactor of ribonucleotide reductase (RNR), probably by providing electrons for reduction during radical cofactor maturation in the catalytic small subunit RNR2. This chain is Fe-S cluster assembly protein dre2, found in Sclerotinia sclerotiorum (strain ATCC 18683 / 1980 / Ss-1) (White mold).